The following is a 126-amino-acid chain: Glycine cleavage system H protein (126 aa).

In terms of domain architecture, Lipoyl-binding spans 22–104; that stretch reads TVTIGITEYA…YEKAWMVKVK (83 aa). At Lys-63 the chain carries N6-lipoyllysine.

This sequence belongs to the GcvH family. In terms of assembly, the glycine cleavage system is composed of four proteins: P, T, L and H. It depends on (R)-lipoate as a cofactor.

Its function is as follows. The glycine cleavage system catalyzes the degradation of glycine. The H protein shuttles the methylamine group of glycine from the P protein to the T protein. In terms of biological role, is also involved in protein lipoylation via its role as an octanoyl/lipoyl carrier protein intermediate. The polypeptide is Glycine cleavage system H protein (Staphylococcus carnosus (strain TM300)).